Reading from the N-terminus, the 1978-residue chain is Dedicator of cytokinesis protein 4 (1978 aa).

In terms of domain architecture, SH3 spans 6 to 67; that stretch reads EHEKYGVVIA…PSSYVHLKNA (62 aa). Tyr-167 carries the phosphotyrosine modification. Thr-193 bears the Phosphothreonine mark. Positions 401–574 constitute a C2 DOCK-type domain; it reads RNDLYITVER…ESFWITSFLC (174 aa). Positions 1199–1605 constitute a DOCKER domain; that stretch reads KTELNKEEMY…FGIQEFPACI (407 aa). Phosphoserine occurs at positions 1608, 1616, 1623, 1627, 1629, and 1640. Disordered stretches follow at residues 1657–1738 and 1751–1978; these read SQAS…IYPT and IGDG…VSQL. The segment covering 1681 to 1712 has biased composition (low complexity); that stretch reads PSPSTSSLSSTHSASPNVTSSAPSSARASPLL. Ser-1778 carries the phosphoserine modification. The short motif at 1797 to 1803 is the SH3-binding element; it reads PPVPPRP. Residues 1804–1818 show a composition bias toward polar residues; that stretch reads TQTASPARHTTSVSP. The span at 1842–1872 shows a compositional bias: low complexity; sequence SPGLSSNSPVLSGSYSSGISSLSRCSTSETS. Residues 1873–1882 show a composition bias toward polar residues; sequence GFENQANEQS. Positions 1885–1895 are enriched in pro residues; the sequence is VPVPVPVPVPV. The segment covering 1953–1966 has biased composition (basic and acidic residues); it reads SHLENGTRRTEPGP.

Belongs to the DOCK family. Interacts with nucleotide-free Rap1; functions as a guanine nucleotide exchange factor (GEF) for Rap1. Interacts (via DOCKER domain) with RAC1; functions as a guanine nucleotide exchange factor (GEF) for RAC1. Interacts with the SH3 domain of CRK. Interacts with FASLG. Interacts with ELMO2 and EPHA2; mediates activation of RAC1 by EPHA2. Interacts with USH1C (via PDZ 1 domain). Expressed in inner ear (at protein level).

The protein localises to the cell membrane. Its subcellular location is the cytoplasm. It localises to the cytosol. Its function is as follows. Functions as a guanine nucleotide exchange factor (GEF) that promotes the exchange of GDP to GTP, converting inactive GDP-bound small GTPases into their active GTP-bound form. Involved in regulation of adherens junction between cells. Plays a role in cell migration. Has a higher guanine nucleotide exchange factor activity compared to other isoforms. The sequence is that of Dedicator of cytokinesis protein 4 (Dock4) from Mus musculus (Mouse).